The chain runs to 499 residues: Probable dipeptidase B (499 aa).

The active site involves Cys26.

The protein belongs to the peptidase C69 family.

It catalyses the reaction an L-aminoacyl-L-amino acid + H2O = 2 an L-alpha-amino acid. In Streptococcus pyogenes serotype M18 (strain MGAS8232), this protein is Probable dipeptidase B (pepDB).